The following is a 266-amino-acid chain: 14-3-3 protein homolog (266 aa).

Residues 154 to 177 (KQAADQAQESYQKATETAEGHSPA) are disordered. Residues 158-168 (DQAQESYQKAT) are compositionally biased toward polar residues.

Belongs to the 14-3-3 family.

The sequence is that of 14-3-3 protein homolog from Neospora caninum (Coccidian parasite).